The following is a 427-amino-acid chain: Adenylosuccinate synthetase (427 aa).

Residues 12 to 18 (GDEGKGK) and 40 to 42 (GHT) each bind GTP. The active-site Proton acceptor is the Asp13. The Mg(2+) site is built by Asp13 and Gly40. IMP is bound by residues 13-16 (DEGK), 38-41 (NAGH), Thr128, Arg142, Gln223, Thr238, and Arg302. His41 functions as the Proton donor in the catalytic mechanism. Substrate is bound at residue 298 to 304 (TTTGRAR). GTP-binding positions include Arg304, 330–332 (KLD), and 412–414 (AVG).

The protein belongs to the adenylosuccinate synthetase family. As to quaternary structure, homodimer. Mg(2+) serves as cofactor.

Its subcellular location is the cytoplasm. It catalyses the reaction IMP + L-aspartate + GTP = N(6)-(1,2-dicarboxyethyl)-AMP + GDP + phosphate + 2 H(+). It functions in the pathway purine metabolism; AMP biosynthesis via de novo pathway; AMP from IMP: step 1/2. Its function is as follows. Plays an important role in the de novo pathway of purine nucleotide biosynthesis. Catalyzes the first committed step in the biosynthesis of AMP from IMP. In Desulfitobacterium hafniense (strain DSM 10664 / DCB-2), this protein is Adenylosuccinate synthetase.